The following is a 508-amino-acid chain: Putative POTE ankyrin domain family member M (508 aa).

ANK repeat units lie at residues 172–201 (QKRT…QLNI), 205–234 (KKRT…DPNI), 238–267 (YGNT…DIES), 271–300 (HGLT…NLNA), and 304–333 (YGRT…DVSS). The interval 369–487 (SSENSNPEQD…KQLSEEQNTG (119 aa)) is disordered. Basic and acidic residues-rich tracts occupy residues 377 to 392 (QDLK…RLKG) and 406 to 421 (EINK…EMKK). Residues 476 to 487 (TQKQLSEEQNTG) show a composition bias toward polar residues.

The protein belongs to the POTE family.

The protein is Putative POTE ankyrin domain family member M (POTEM) of Homo sapiens (Human).